The chain runs to 443 residues: Tol-Pal system protein TolB (443 aa).

Positions 1–31 (MMIMTTRTFFSWFIVICAFWLTSFSSVPVHA) are cleaved as a signal peptide. The tract at residues 422 to 443 (ERQLPTPNDASDPAWSPLLNIQ) is disordered.

This sequence belongs to the TolB family. In terms of assembly, the Tol-Pal system is composed of five core proteins: the inner membrane proteins TolA, TolQ and TolR, the periplasmic protein TolB and the outer membrane protein Pal. They form a network linking the inner and outer membranes and the peptidoglycan layer.

It localises to the periplasm. Functionally, part of the Tol-Pal system, which plays a role in outer membrane invagination during cell division and is important for maintaining outer membrane integrity. The polypeptide is Tol-Pal system protein TolB (Bartonella henselae (strain ATCC 49882 / DSM 28221 / CCUG 30454 / Houston 1) (Rochalimaea henselae)).